A 347-amino-acid polypeptide reads, in one-letter code: NADH-ubiquinone oxidoreductase chain 2 (347 aa).

Transmembrane regions (helical) follow at residues 13–33 (IFAGTLITALSSHWFFTWVGL), 56–76 (AIKYFLTQATASMILLMAILF), 96–116 (LMIMMAMAMKLGMAPFHFWVP), 123–143 (PLTSGLLLLTWQKLAPISIMY), 149–169 (LNVSLLLTLSILSIMAGSWGG), 178–198 (ILAYSSITHMGWMMAVLPYNP), 201–221 (TILNLTIYIILTTTAFLLLNL), 247–267 (TLLSLGGLPPLTGFLPKWAII), 274–294 (NSLIIPTIMATITLLNLYFYL), and 326–346 (LPTLIALTTLLLPISPFMLMI).

This sequence belongs to the complex I subunit 2 family. In terms of assembly, core subunit of respiratory chain NADH dehydrogenase (Complex I) which is composed of 45 different subunits. Interacts with TMEM242.

It localises to the mitochondrion inner membrane. It catalyses the reaction a ubiquinone + NADH + 5 H(+)(in) = a ubiquinol + NAD(+) + 4 H(+)(out). Its function is as follows. Core subunit of the mitochondrial membrane respiratory chain NADH dehydrogenase (Complex I) which catalyzes electron transfer from NADH through the respiratory chain, using ubiquinone as an electron acceptor. Essential for the catalytic activity and assembly of complex I. The chain is NADH-ubiquinone oxidoreductase chain 2 from Homo sapiens (Human).